The sequence spans 1364 residues: Serine protease SepA autotransporter (1364 aa).

A signal peptide spans 1-56 (MNKIYYLKYCHITKSLIAVSELARRVTCKSHRRLSRRVILTSVAALSLSSAWPALS). In terms of domain architecture, Peptidase S6 spans 57–307 (ATVSAEIPYQ…VVTTQDFLGQ (251 aa)). Residues histidine 134, aspartate 162, and serine 267 each act as charge relay system in the active site. An Autotransporter domain is found at 1098–1364 (DTQGDAGVWA…AINANFRYVF (267 aa)).

In terms of processing, cleaved to release the mature protein from the outer membrane. Cleavage is performed by an unknown protease.

It localises to the periplasm. The protein resides in the secreted. It is found in the cell surface. The protein localises to the cell outer membrane. With respect to regulation, inhibited by the serine protease inhibitor PMSF, but not by benzamidine, alpha 1-antitrypsin, alpha 1-antichymotrypsin. Not inhibited by metalloprotease inhibitors such as EDTA and orthophenanthroline. Major protein secreted in laboratory media showing proteolytic activity. May be involved in invasion and destruction of host intestinal epithelium. In Shigella flexneri, this protein is Serine protease SepA autotransporter (sepA).